Reading from the N-terminus, the 385-residue chain is Photoreceptor ankyrin repeat protein (385 aa).

ANK repeat units follow at residues 17 to 46, 53 to 83, 87 to 116, 122 to 151, and 156 to 190; these read CNLK…SPEE, NGRT…DVNQ, DGNT…GLDL, RGLT…DLSS, and RGKT…QLSL. Residues 270 to 385 are disordered; it reads LGTRGKSVPE…GGLGQAGGSK (116 aa). Positions 284-297 are enriched in pro residues; sequence APPPPPEPHPPQQV. The span at 304–326 shows a compositional bias: polar residues; it reads APNQSPQSMFSQWLQSRDSTRSQ. The segment covering 361-373 has biased composition (basic and acidic residues); the sequence is FQERKKKEEETEP. Residues 374-385 show a composition bias toward gly residues; sequence RGGGLGQAGGSK.

As to expression, isoform 1: Expressed predominantly in the retina. Isoform 2: Expressed in the pineal gland.

It localises to the cytoplasm. The protein localises to the cytosol. Its subcellular location is the nucleus. Acts as a transcriptional repressor for CRX-activated photoreceptor gene regulation. This Mus musculus (Mouse) protein is Photoreceptor ankyrin repeat protein.